Here is a 185-residue protein sequence, read N- to C-terminus: UPF0200 protein TK1334 (185 aa).

7 to 14 serves as a coordination point for ATP; it reads GMPGSGKS.

It belongs to the UPF0200 family.

This chain is UPF0200 protein TK1334, found in Thermococcus kodakarensis (strain ATCC BAA-918 / JCM 12380 / KOD1) (Pyrococcus kodakaraensis (strain KOD1)).